The following is a 186-amino-acid chain: Putative transcriptional regulator encoded by LINC00473 (186 aa).

Residues 1–62 are disordered; it reads MELSAAAGRR…RDCTPTCTNA (62 aa). Basic and acidic residues predominate over residues 18-40; that stretch reads FTGRHRTERSQERGSTPRKERSM.

Its function is as follows. May play a role in cAMP-mediated gene transcription. The chain is Putative transcriptional regulator encoded by LINC00473 (LINC00473) from Homo sapiens (Human).